The chain runs to 131 residues: Classical arabinogalactan protein 2 (131 aa).

The first 21 residues, 1–21 (MNSKAMQALIFLGFLATSCLA), serve as a signal peptide directing secretion. Gln22 is subject to Pyrrolidone carboxylic acid. Residues Pro24, Pro26, Pro28, Pro34, and Pro35 each carry the 4-hydroxyproline modification. O-linked (Ara...) hydroxyproline glycosylation is found at Pro24, Pro26, Pro28, Pro34, and Pro35. Positions 24-106 (PAPAPTTVTP…PGPDGAADAP (83 aa)) are disordered. Pro residues-rich tracts occupy residues 25-38 (APAP…PTAL) and 49-64 (IASP…PAPT). Low complexity-rich tracts occupy residues 65–76 (TSPTTSPVASPP) and 90–106 (TPTS…ADAP). Ser107 carries the GPI-anchor amidated serine lipid modification. A propeptide spans 108–131 (AAWANKAFLVGTAVAGALYAVVLA) (removed in mature form).

This sequence belongs to the classical AGP family. Post-translationally, O-glycosylated on hydroxyprolines; noncontiguous hydroxylproline residues are glycosylated with arabinogalactan.

The protein localises to the cell membrane. Its function is as follows. Proteoglycan that seems to be implicated in diverse developmental roles such as differentiation, cell-cell recognition, embryogenesis and programmed cell death. This Arabidopsis thaliana (Mouse-ear cress) protein is Classical arabinogalactan protein 2 (AGP2).